The primary structure comprises 109 residues: MKQDIYINIKAFDCSLLEECVRKFIDELKRSSAKLSGPIALPRKDSKFIVNRSPHVDKKSREQFEMRTSRRLIVLHDLTPTMMQMLTGLSFSAGVEVDLKVKEVKEVKV.

It belongs to the universal ribosomal protein uS10 family. In terms of assembly, part of the 30S ribosomal subunit.

Involved in the binding of tRNA to the ribosomes. In Wolbachia pipientis wMel, this protein is Small ribosomal subunit protein uS10.